A 132-amino-acid chain; its full sequence is Two-component response regulator ORR42 (132 aa).

Positions 11 to 125 (RALLVEDIKV…LEHILQETRS (115 aa)) constitute a Response regulatory domain. D61 carries the post-translational modification 4-aspartylphosphate.

This sequence belongs to the ARR family. Type-C subfamily. Post-translationally, two-component system major event consists of a His-to-Asp phosphorelay between a sensor histidine kinase (HK) and a response regulator (RR). In plants, the His-to-Asp phosphorelay involves an additional intermediate named Histidine-containing phosphotransfer protein (HPt). This multistep phosphorelay consists of a His-Asp-His-Asp sequential transfer of a phosphate group between first a His and an Asp of the HK protein, followed by the transfer to a conserved His of the HPt protein and finally the transfer to an Asp in the receiver domain of the RR protein.

Functions as a response regulator involved in His-to-Asp phosphorelay signal transduction system. Phosphorylation of the Asp residue in the receiver domain activates the ability of the protein to promote the transcription of target genes. May directly activate some type-A response regulators in response to cytokinins. This Oryza sativa subsp. japonica (Rice) protein is Two-component response regulator ORR42.